We begin with the raw amino-acid sequence, 906 residues long: Microtubule-associated protein 6 (906 aa).

The interval 1-15 (MAWPCITRACCIARF) is calmodulin-binding. Residues Cys5, Cys10, and Cys11 are each lipidated (S-palmitoyl cysteine). Disordered regions lie at residues 37–56 (TEHP…ALAP), 65–411 (TQPA…RAVA), 441–651 (KPVK…GPVK), 674–782 (NKDS…TAPR), and 817–906 (AKDQ…EGSP). Pro residues predominate over residues 41 to 50 (GAPPQPPAPL). Residues 93–117 (AAPGRSGLGLGAASASTSGSGPADS) are compositionally biased toward low complexity. Ser98 carries the post-translational modification Phosphoserine. The segment at 116 to 139 (DSVMRQDYRAWKVQRPEPSCRPRS) is mn 1. The segment covering 119–139 (MRQDYRAWKVQRPEPSCRPRS) has biased composition (basic and acidic residues). A calmodulin-binding region spans residues 124–138 (RAWKVQRPEPSCRPR). Tyr141 is modified (phosphotyrosine). Basic and acidic residues predominate over residues 147–171 (PFERETQYQKDFRAWPLPRRGDHPW). A mn 2 region spans residues 151–174 (ETQYQKDFRAWPLPRRGDHPWIPK). The segment at 160–174 (AWPLPRRGDHPWIPK) is calmodulin-binding. Ser185 is modified (phosphoserine). Residues 187-201 (PVLGVPKRRPQSQER) are calmodulin-binding. Ser207 bears the Phosphoserine mark. One copy of the Mc-1 repeat lies at 222 to 267 (LAAGKASGVDQRDTRRKAGPAWMVTRNEGHEEKPLPPAQSQTQEGG). A 4 X approximate tandem repeat Mc region spans residues 222–405 (LAAGKASGVD…HAQGTGPEGG (184 aa)). Calmodulin-binding stretches follow at residues 235 to 249 (TRRK…TRNE), 280 to 294 (DTRR…VTRS), 325 to 339 (RDTR…MVTR), 375 to 389 (RKAG…SEGH), 435 to 449 (RAWT…IKAK), 486 to 500 (RRRI…FKEC), and 513 to 527 (PKKT…RKAK). The stretch at 268–313 (PAAGKASGADQRDTRRKAGPAWMVTRSEGHEEKPLPPAQSQTQEGG) is one Mc-2 repeat. One copy of the Mc-3 repeat lies at 314-359 (PAAGKASGADQRDTRRKAGPAWMVTRTEGHEETPLPPAQSQTQEGG). One copy of the Mc-4 repeat lies at 360–405 (PAAGKASGADERDTRRKAGPAWMVRRSEGHEQTPAAHAQGTGPEGG). A mn 3 region spans residues 427-450 (SSSYRNEFRAWTDIKPVKPIKAKP). The span at 496–505 (PFKECPKVEK) shows a compositional bias: basic and acidic residues. The span at 512–527 (KPKKTSTSHKPPRKAK) shows a compositional bias: basic residues. Positions 549-573 (KPDDKEQSKEMNNKLAEAKESRVKP) are enriched in basic and acidic residues. 2 positions are modified to phosphoserine: Ser632 and Ser687. A compositionally biased stretch (polar residues) spans 695 to 711 (KNQSPVVPASTKDQSFP). Over residues 715 to 742 (PRKDPGPVIPEPEKDRAPTVPERRKDQH) the composition is skewed to basic and acidic residues. Ser905 is modified (phosphoserine).

The protein belongs to the STOP family. Interacts with calmodulin (via C-terminus); the interaction is dependent on Ca(2+). Interacts (via C-terminus) with TMEM106B (via N-terminus). Interacts with ZDHHC13 (via ANK repeats). Interacts with ZDHHC17 (via ANK repeats). Palmitoylated. Probably depalmitoylated by ABHD17A, ABHD17B and ABHD17C. During neuronal polarization, palmitoylation and depalmitoylation cycles regulate MAP6 shuttling between secretory vesicles and microtubules, and its polarized distribution in the axon. Isoform 1 is specifically expressed in adult brain. Isoform 2 is predominantly expressed in embryonic brain; expression persists at low levels in the adult brain. Isoform 3 is expressed at high levels in lung and at lower levels in testis, heart, muscle and kidney (at protein level). Oligodendrocytes express a major isoform of 89 kDa (O-STOP). Astrocytes also express an isoform of 60 kDa (A-STOP).

Its subcellular location is the cytoplasm. It localises to the cytoskeleton. It is found in the golgi apparatus. The protein resides in the cell projection. The protein localises to the axon. Its subcellular location is the dendrite. It localises to the cytoplasmic vesicle. It is found in the secretory vesicle membrane. Its function is as follows. Involved in microtubule stabilization in many cell types, including neuronal cells. Specifically has microtubule cold stabilizing activity. Involved in dendrite morphogenesis and maintenance by regulating lysosomal trafficking via its interaction with TMEM106B. Regulates KIF5A-mediated axonal cargo transport. Regulates axonal growth during neuron polarization. The sequence is that of Microtubule-associated protein 6 (Map6) from Mus musculus (Mouse).